Consider the following 174-residue polypeptide: MSLAKSAANKLDWAKVISSLRITGSTATQLSSFKKRNDEARRQLLELQSQPTEVDFSHYRSVLKNTSVIDKIESYVKQYKPVKIDASKQLQVIESFEKHAMTNAKETESLVSKELKDLQSTLDNIQSARPFDELTVDDLTKIKPEIDAKVEEMVKKGKWDVPGYKDRFGNLNVM.

S2 bears the N-acetylserine mark.

It belongs to the ATPase d subunit family. In terms of assembly, F-type ATPases have 2 components, CF(1) - the catalytic core - and CF(0) - the membrane proton channel. In yeast, the dimeric form of ATP synthase consists of 17 polypeptides: alpha, beta, gamma, delta, epsilon, 4 (B), 5 (OSCP), 6 (A), 8, 9 (C), d, E (Tim11), f, g, h, i/j and k.

It localises to the mitochondrion. The protein localises to the mitochondrion inner membrane. Mitochondrial membrane ATP synthase (F(1)F(0) ATP synthase or Complex V) produces ATP from ADP in the presence of a proton gradient across the membrane which is generated by electron transport complexes of the respiratory chain. F-type ATPases consist of two structural domains, F(1) - containing the extramembraneous catalytic core, and F(0) - containing the membrane proton channel, linked together by a central stalk and a peripheral stalk. During catalysis, ATP synthesis in the catalytic domain of F(1) is coupled via a rotary mechanism of the central stalk subunits to proton translocation. Part of the complex F(0) domain and the peripheric stalk, which acts as a stator to hold the catalytic alpha(3)beta(3) subcomplex and subunit a/ATP6 static relative to the rotary elements. This Saccharomyces cerevisiae (strain ATCC 204508 / S288c) (Baker's yeast) protein is ATP synthase subunit d, mitochondrial (ATP7).